We begin with the raw amino-acid sequence, 61 residues long: Insect toxin BsIT1 (61 aa).

Residues 1–61 (DGYILMRNGC…KHLNYHKKTC (61 aa)) form the LCN-type CS-alpha/beta domain. 4 cysteine pairs are disulfide-bonded: C10-C61, C14-C35, C21-C42, and C25-C44.

This sequence belongs to the long (4 C-C) scorpion toxin superfamily. Sodium channel inhibitor family. Beta subfamily. As to expression, expressed by the venom gland.

Its subcellular location is the secreted. Depressant insect beta-toxins cause a transient contraction paralysis followed by a slow flaccid paralysis. They bind voltage-independently at site-4 of sodium channels (Nav) and shift the voltage of activation toward more negative potentials thereby affecting sodium channel activation and promoting spontaneous and repetitive firing. This toxin is active only on insects and causes a transient contraction paralysis followed by a slow flaccid paralysis. The sequence is that of Insect toxin BsIT1 from Hottentotta tamulus sindicus (Scorpion).